Reading from the N-terminus, the 177-residue chain is Endoribonuclease YbeY (177 aa).

The Zn(2+) site is built by histidine 118, histidine 122, and histidine 128.

Belongs to the endoribonuclease YbeY family. It depends on Zn(2+) as a cofactor.

It localises to the cytoplasm. Its function is as follows. Single strand-specific metallo-endoribonuclease involved in late-stage 70S ribosome quality control and in maturation of the 3' terminus of the 16S rRNA. The sequence is that of Endoribonuclease YbeY from Mycobacterium sp. (strain JLS).